A 1921-amino-acid chain; its full sequence is Endoribonuclease Dicer (1921 aa).

The Helicase ATP-binding domain maps to 51-227 (LLEAALDHNT…ELEEKIKKLE (177 aa)). 64 to 71 (LNTGSGKT) lines the ATP pocket. Positions 175 to 178 (DECH) match the DECH box motif. Residues 409-433 (YVSWSDSEDDDEDEEIEEKEKPETN) are disordered. Over residues 414 to 425 (DSEDDDEDEEIE) the composition is skewed to acidic residues. Residues 433–602 (NFPSPFTNIL…SVDTSETETE (170 aa)) enclose the Helicase C-terminal domain. The Dicer dsRNA-binding fold domain occupies 630–722 (AIGHINRYCA…MPVGKETVKY (93 aa)). Positions 727–746 (DLHDEEETSVPGRPGSTKRR) are disordered. The 148-residue stretch at 895-1042 (KFMEDIEKSE…LVPELCAIHP (148 aa)) folds into the PAZ domain. Positions 1270 to 1289 (NLSKDKVDSEKNTSSGYSSK) are disordered. RNase III domains lie at 1277 to 1404 (DSEK…EETT) and 1665 to 1823 (FENF…MDSG). Residues Glu-1317, Asp-1396, Glu-1399, and Glu-1704 each coordinate Mg(2+). Positions 1782–1801 (QGMDSELRRSEEDEEKEEDI) are disordered. Mg(2+) is bound by residues Asp-1809 and Glu-1812. Positions 1848–1913 (VPRSPVRELL…ARRALRSLKA (66 aa)) constitute a DRBM domain.

Belongs to the helicase family. Dicer subfamily. In terms of assembly, component of the RISC loading complex (RLC), or micro-RNA (miRNA) loading complex (miRLC), which is composed of DICER1, AGO2 and TARBP2; DICER1 and TARBP2 are required to process precursor miRNAs (pre-miRNAs) to mature miRNAs and then load them onto AGO2. Note that the trimeric RLC/miRLC is also referred to as RISC. Requires Mg(2+) as cofactor. It depends on Mn(2+) as a cofactor.

The protein localises to the cytoplasm. The enzyme catalyses Endonucleolytic cleavage to 5'-phosphomonoester.. Functionally, double-stranded RNA (dsRNA) endoribonuclease playing a central role in short dsRNA-mediated post-transcriptional gene silencing. Cleaves naturally occurring long dsRNAs and short hairpin pre-microRNAs (miRNA) into fragments of twenty-one to twenty-three nucleotides with 3' overhang of two nucleotides, producing respectively short interfering RNAs (siRNA) and mature microRNAs. SiRNAs and miRNAs serve as guide to direct the RNA-induced silencing complex (RISC) to complementary RNAs to degrade them or prevent their translation. Gene silencing mediated by siRNAs, also called RNA interference, controls the elimination of transcripts from mobile and repetitive DNA elements of the genome but also the degradation of exogenous RNA of viral origin for instance. The miRNA pathway on the other side is a mean to specifically regulate the expression of target genes. This Gallus gallus (Chicken) protein is Endoribonuclease Dicer (DICER1).